The sequence spans 250 residues: 5-oxoprolinase subunit A (250 aa).

Belongs to the LamB/PxpA family. Forms a complex composed of PxpA, PxpB and PxpC.

It carries out the reaction 5-oxo-L-proline + ATP + 2 H2O = L-glutamate + ADP + phosphate + H(+). Functionally, catalyzes the cleavage of 5-oxoproline to form L-glutamate coupled to the hydrolysis of ATP to ADP and inorganic phosphate. This chain is 5-oxoprolinase subunit A, found in Streptomyces coelicolor (strain ATCC BAA-471 / A3(2) / M145).